Consider the following 299-residue polypeptide: Phosphoribosylaminoimidazole-succinocarboxamide synthase (299 aa).

The protein belongs to the SAICAR synthetase family.

It carries out the reaction 5-amino-1-(5-phospho-D-ribosyl)imidazole-4-carboxylate + L-aspartate + ATP = (2S)-2-[5-amino-1-(5-phospho-beta-D-ribosyl)imidazole-4-carboxamido]succinate + ADP + phosphate + 2 H(+). The protein operates within purine metabolism; IMP biosynthesis via de novo pathway; 5-amino-1-(5-phospho-D-ribosyl)imidazole-4-carboxamide from 5-amino-1-(5-phospho-D-ribosyl)imidazole-4-carboxylate: step 1/2. The polypeptide is Phosphoribosylaminoimidazole-succinocarboxamide synthase (ade7) (Schizosaccharomyces pombe (strain 972 / ATCC 24843) (Fission yeast)).